The sequence spans 78 residues: Esculentin-2Vb (78 aa).

The N-terminal stretch at 1–22 (MFTMKKSLLLLFFLGTISLSLC) is a signal peptide. A propeptide spanning residues 23-39 (EEERGADEEEGDGEKLM) is cleaved from the precursor. An intrachain disulfide couples C72 to C78.

As to expression, expressed by the skin glands.

It is found in the secreted. Functionally, antimicrobial peptide. This Odorrana versabilis (Chinese bamboo leaf odorous frog) protein is Esculentin-2Vb.